The primary structure comprises 435 residues: Cell adhesion molecule 2 (435 aa).

The first 24 residues, 1–24 (MIWKRSAVLRFYSVCGLLLLGSQG), serve as a signal peptide directing secretion. Over 25–367 (QFPLTQNVTV…SLAGQNGPDH (343 aa)) the chain is Extracellular. An Ig-like V-type domain is found at 27–119 (PLTQNVTVVE…PVKTSKAYLT (93 aa)). Residues N31 and N51 are each glycosylated (N-linked (GlcNAc...) asparagine). 3 cysteine pairs are disulfide-bonded: C44–C104, C146–C203, and C248–C296. Ig-like C2-type domains lie at 127–219 (PQIS…VAMQ) and 227–312 (PSVK…YVLI). N291 carries N-linked (GlcNAc...) asparagine glycosylation. A compositionally biased stretch (low complexity) spans 341–351 (TTSPSTSASSS). The segment at 341–360 (TTSPSTSASSSSRRDPNSLA) is disordered. The helical transmembrane segment at 368 to 388 (ALIGGIVAVVVFVTLCSIFLL) threads the bilayer. At 389 to 435 (GRYLARHKGTYLTNEAKGAEDAPDADTAIINAEGSQVNAEEKKEYFI) the chain is on the cytoplasmic side. Residue S423 is modified to Phosphoserine.

Belongs to the nectin family. In terms of processing, glycosylation at Asn-51 reduces adhesive binding.

It localises to the cell membrane. The protein resides in the synapse. Its subcellular location is the cell projection. The protein localises to the axon. In terms of biological role, adhesion molecule that engages in homo- and heterophilic interactions with the other nectin-like family members, leading to cell aggregation. Important for synapse organization, providing regulated trans-synaptic adhesion. Preferentially binds to oligodendrocytes. The sequence is that of Cell adhesion molecule 2 (Cadm2) from Rattus norvegicus (Rat).